The chain runs to 379 residues: Cytochrome b (379 aa).

Transmembrane regions (helical) follow at residues 33–53, 77–98, 113–133, and 178–198; these read FGSL…FLAM, WLIR…YLHI, WNIG…GYVL, and FFAF…VHLL. Positions 83 and 97 each coordinate heme b. Positions 182 and 196 each coordinate heme b. His201 contributes to the a ubiquinone binding site. The next 4 membrane-spanning stretches (helical) occupy residues 226–246, 288–308, 320–340, and 347–367; these read TKDF…VLFF, MGGV…PHIQ, ISQF…WIGG, and FIII…AFLP.

This sequence belongs to the cytochrome b family. In terms of assembly, the cytochrome bc1 complex contains 11 subunits: 3 respiratory subunits (MT-CYB, CYC1 and UQCRFS1), 2 core proteins (UQCRC1 and UQCRC2) and 6 low-molecular weight proteins (UQCRH/QCR6, UQCRB/QCR7, UQCRQ/QCR8, UQCR10/QCR9, UQCR11/QCR10 and a cleavage product of UQCRFS1). This cytochrome bc1 complex then forms a dimer. Heme b serves as cofactor.

It is found in the mitochondrion inner membrane. In terms of biological role, component of the ubiquinol-cytochrome c reductase complex (complex III or cytochrome b-c1 complex) that is part of the mitochondrial respiratory chain. The b-c1 complex mediates electron transfer from ubiquinol to cytochrome c. Contributes to the generation of a proton gradient across the mitochondrial membrane that is then used for ATP synthesis. The sequence is that of Cytochrome b (MT-CYB) from Dipodomys ordii (Ord's kangaroo rat).